A 704-amino-acid polypeptide reads, in one-letter code: Elongation factor G (704 aa).

In terms of domain architecture, tr-type G spans 10 to 290; sequence NKVRNIGIMA…AVIDYLPSPL (281 aa). GTP-binding positions include 19–26, 83–87, and 137–140; these read AHIDAGKT, DTPGH, and NKMD.

It belongs to the TRAFAC class translation factor GTPase superfamily. Classic translation factor GTPase family. EF-G/EF-2 subfamily.

The protein localises to the cytoplasm. Functionally, catalyzes the GTP-dependent ribosomal translocation step during translation elongation. During this step, the ribosome changes from the pre-translocational (PRE) to the post-translocational (POST) state as the newly formed A-site-bound peptidyl-tRNA and P-site-bound deacylated tRNA move to the P and E sites, respectively. Catalyzes the coordinated movement of the two tRNA molecules, the mRNA and conformational changes in the ribosome. The protein is Elongation factor G of Clavibacter michiganensis subsp. michiganensis (strain NCPPB 382).